Here is a 260-residue protein sequence, read N- to C-terminus: uncharacterized protein (260 aa).

A signal peptide spans M1–G22. C23 is lipidated: N-palmitoyl cysteine. C23 carries the S-diacylglycerol cysteine lipid modification.

It belongs to the staphylococcal tandem lipoprotein family.

It is found in the cell membrane. This is an uncharacterized protein from Staphylococcus epidermidis (strain ATCC 35984 / DSM 28319 / BCRC 17069 / CCUG 31568 / BM 3577 / RP62A).